Here is a 101-residue protein sequence, read N- to C-terminus: NAD(P)H-quinone oxidoreductase subunit 4L, chloroplastic (101 aa).

A run of 3 helical transmembrane segments spans residues Met-2–Ile-22, Met-32–Phe-52, and Ile-61–Ile-81.

It belongs to the complex I subunit 4L family. As to quaternary structure, NDH is composed of at least 16 different subunits, 5 of which are encoded in the nucleus.

It is found in the plastid. Its subcellular location is the chloroplast thylakoid membrane. The enzyme catalyses a plastoquinone + NADH + (n+1) H(+)(in) = a plastoquinol + NAD(+) + n H(+)(out). The catalysed reaction is a plastoquinone + NADPH + (n+1) H(+)(in) = a plastoquinol + NADP(+) + n H(+)(out). Its function is as follows. NDH shuttles electrons from NAD(P)H:plastoquinone, via FMN and iron-sulfur (Fe-S) centers, to quinones in the photosynthetic chain and possibly in a chloroplast respiratory chain. The immediate electron acceptor for the enzyme in this species is believed to be plastoquinone. Couples the redox reaction to proton translocation, and thus conserves the redox energy in a proton gradient. In Ranunculus macranthus (Large buttercup), this protein is NAD(P)H-quinone oxidoreductase subunit 4L, chloroplastic.